We begin with the raw amino-acid sequence, 675 residues long: Calcium channel YVC1 (675 aa).

At 1–236 the chain is on the cytoplasmic side; that stretch reads MVSANGDLHL…PVRLKAPVYQ (236 aa). Residues 237 to 257 traverse the membrane as a helical segment; sequence NYLQMIFSFLFLGLYTLVVNG. Residues 258–295 lie on the Vacuolar side of the membrane; sequence KDSERVQSFDLLESIFYVFNTGFILDELTKLYYIGYAH. Residues 296–316 form a helical membrane-spanning segment; the sequence is LSFWNLFNDTTYLIITFAMGF. Residues 317–335 lie on the Cytoplasmic side of the membrane; that stretch reads RAMSVTPLNAKYSSEDWDK. Residues 336-355 form a helical membrane-spanning segment; that stretch reads ISYRVLSCAAPFVWSRLLLY. Topologically, residues 356 to 376 are vacuolar; it reads LESQRFIGIMLVILKHMMKES. A helical transmembrane segment spans residues 377-397; that stretch reads IVFFFLLFLIMIGFTQGFLGL. The Cytoplasmic segment spans residues 398–405; it reads DSADGKRD. Residues 406–426 form a helical membrane-spanning segment; sequence ITGPILGNLTITVLGLGSFDV. Topologically, residues 427 to 436 are vacuolar; that stretch reads FEEFAPPYAA. Residues 437 to 457 traverse the membrane as a helical segment; that stretch reads ILYYGYYFIVSVILLNILIAL. The Cytoplasmic segment spans residues 458-675; it reads YSTAYQKVID…EKLDIKDKKE (218 aa). A Phosphothreonine modification is found at T636.

It belongs to the transient receptor (TC 1.A.4) family.

It localises to the vacuole membrane. Functionally, required for release of calcium ions from the vacuole in response to hyperosmotic shock. The protein is Calcium channel YVC1 of Saccharomyces cerevisiae (strain ATCC 204508 / S288c) (Baker's yeast).